Here is a 278-residue protein sequence, read N- to C-terminus: Pantothenate synthetase (278 aa).

ATP is bound at residue 28-35 (MGNLHAGH). The active-site Proton donor is the histidine 35. Residue glutamine 59 participates in (R)-pantoate binding. Glutamine 59 is a binding site for beta-alanine. Residue 145-148 (GKKD) participates in ATP binding. Glutamine 151 is a binding site for (R)-pantoate. 182 to 185 (LSSR) provides a ligand contact to ATP.

The protein belongs to the pantothenate synthetase family. Homodimer.

The protein localises to the cytoplasm. It carries out the reaction (R)-pantoate + beta-alanine + ATP = (R)-pantothenate + AMP + diphosphate + H(+). The protein operates within cofactor biosynthesis; (R)-pantothenate biosynthesis; (R)-pantothenate from (R)-pantoate and beta-alanine: step 1/1. Catalyzes the condensation of pantoate with beta-alanine in an ATP-dependent reaction via a pantoyl-adenylate intermediate. This chain is Pantothenate synthetase, found in Methylobacillus flagellatus (strain ATCC 51484 / DSM 6875 / VKM B-1610 / KT).